The chain runs to 243 residues: CR(VI) reductase (243 aa).

It belongs to the flavin oxidoreductase frp family. Requires FMN as cofactor.

This is CR(VI) reductase (chrR) from Pseudomonas sp. (strain G-1).